Reading from the N-terminus, the 360-residue chain is Photosystem II protein D1 (360 aa).

Helical transmembrane passes span 29 to 46 (YIGWFGCLMFPTLLTATS), 118 to 133 (HFLLGVASYMGREWEL), and 142 to 156 (WIFVAFSAPVAAASA). His-118 is a chlorophyll a binding site. Pheophytin a is bound at residue Tyr-126. Asp-170 and Glu-189 together coordinate [CaMn4O5] cluster. A helical transmembrane segment spans residues 197–218 (FHMAGVAGVFGGSLFSAMHGSL). Position 198 (His-198) interacts with chlorophyll a. A quinone contacts are provided by residues His-215 and 264-265 (SF). Residue His-215 participates in Fe cation binding. His-272 is a Fe cation binding site. The chain crosses the membrane as a helical span at residues 274–288 (FLALWPVLGIWLTAM). [CaMn4O5] cluster-binding residues include His-332, Glu-333, Asp-342, and Ala-344. A propeptide spanning residues 345-360 (SGDVLPVAFTAPAVNA) is cleaved from the precursor.

Belongs to the reaction center PufL/M/PsbA/D family. In terms of assembly, PSII is composed of 1 copy each of membrane proteins PsbA, PsbB, PsbC, PsbD, PsbE, PsbF, PsbH, PsbI, PsbJ, PsbK, PsbL, PsbM, PsbT, PsbX, PsbY, PsbZ, Psb30/Ycf12, at least 3 peripheral proteins of the oxygen-evolving complex and a large number of cofactors. It forms dimeric complexes. The D1/D2 heterodimer binds P680, chlorophylls that are the primary electron donor of PSII, and subsequent electron acceptors. It shares a non-heme iron and each subunit binds pheophytin, quinone, additional chlorophylls, carotenoids and lipids. D1 provides most of the ligands for the Mn4-Ca-O5 cluster of the oxygen-evolving complex (OEC). There is also a Cl(-1) ion associated with D1 and D2, which is required for oxygen evolution. The PSII complex binds additional chlorophylls, carotenoids and specific lipids. serves as cofactor. Post-translationally, tyr-161 forms a radical intermediate that is referred to as redox-active TyrZ, YZ or Y-Z. In terms of processing, C-terminally processed by CTPA; processing is essential to allow assembly of the oxygen-evolving complex and thus photosynthetic growth.

Its subcellular location is the plastid. The protein resides in the chloroplast thylakoid membrane. It catalyses the reaction 2 a plastoquinone + 4 hnu + 2 H2O = 2 a plastoquinol + O2. Functionally, photosystem II (PSII) is a light-driven water:plastoquinone oxidoreductase that uses light energy to abstract electrons from H(2)O, generating O(2) and a proton gradient subsequently used for ATP formation. It consists of a core antenna complex that captures photons, and an electron transfer chain that converts photonic excitation into a charge separation. The D1/D2 (PsbA/PsbD) reaction center heterodimer binds P680, the primary electron donor of PSII as well as several subsequent electron acceptors. The protein is Photosystem II protein D1 of Thalassiosira pseudonana (Marine diatom).